A 615-amino-acid chain; its full sequence is Kelch-like protein 26 (615 aa).

A compositionally biased stretch (gly residues) spans 1-21; it reads MAESGGSSGGAGGGGAFGAGP. The disordered stretch occupies residues 1–35; sequence MAESGGSSGGAGGGGAFGAGPGPERPNSTADKNGA. The residue at position 2 (alanine 2) is an N-acetylalanine. Positions 63–130 constitute a BTB domain; that stretch reads LDVVLTINRE…AYSAEVTLDL (68 aa). One can recognise a BACK domain in the interval 165 to 266; it reads CLNIGQMATT…QSSELVDSVQ (102 aa). Kelch repeat units follow at residues 310–361, 362–413, 414–460, 461–508, 510–559, and 561–608; these read SLVT…VLDN, FVYV…VLCG, MVYA…ASGG, RLYI…GAGG, IYAL…LLER, and IYIV…PVLL.

In terms of biological role, may play a role in endo(sarco)plasmic reticulum (ER/SR) mitochondrial signaling. May be part of the ubiquitin-proteasome system (UPS) and affect ubiquitination and degradation of target substrates in cardiomyocytes. This chain is Kelch-like protein 26 (KLHL26), found in Homo sapiens (Human).